The sequence spans 333 residues: Atrochrysone carboxyl ACP thioesterase MYCFIDRAFT_190111 (333 aa).

Zn(2+) contacts are provided by histidine 108, histidine 110, aspartate 112, and histidine 113. The Proton donor/acceptor role is filled by aspartate 112.

The protein belongs to the metallo-beta-lactamase superfamily. The cofactor is Zn(2+).

The catalysed reaction is atrochrysone carboxyl-[ACP] + H2O = atrochrysone carboxylate + holo-[ACP] + H(+). The protein operates within secondary metabolite biosynthesis. Atrochrysone carboxyl ACP thioesterase; part of the gene cluster that mediates the biosynthesis of an emodin derivative that may be involved in black Sigatoka disease of banana. The pathway begins with the synthesis of atrochrysone thioester by the polyketide synthase PKS8-1. The atrochrysone carboxyl ACP thioesterase MYCFIDRAFT_190111 then breaks the thioester bond and releases the atrochrysone carboxylic acid from PKS8-1. The decarboxylase MYCFIDRAFT_34057 then catalyzes the concerted decarboxylation-elimination required to convert atochrysone carboxylic acid into emodin anthrone, which is further oxidized to emodin by the anthrone oxygenase MYCFIDRAFT_34418. The functions of the other tailoring enzymes as well as the final product of the cluster have still to be identified. The protein is Atrochrysone carboxyl ACP thioesterase MYCFIDRAFT_190111 of Pseudocercospora fijiensis (strain CIRAD86) (Black leaf streak disease fungus).